Consider the following 1465-residue polypeptide: DNA polymerase III polC-type (1465 aa).

In terms of domain architecture, Exonuclease spans 427–583 (YVVFDVETTG…YDAEATGRLL (157 aa)).

This sequence belongs to the DNA polymerase type-C family. PolC subfamily.

The protein localises to the cytoplasm. It carries out the reaction DNA(n) + a 2'-deoxyribonucleoside 5'-triphosphate = DNA(n+1) + diphosphate. Its function is as follows. Required for replicative DNA synthesis. This DNA polymerase also exhibits 3' to 5' exonuclease activity. The chain is DNA polymerase III polC-type from Streptococcus pyogenes serotype M3 (strain ATCC BAA-595 / MGAS315).